A 182-amino-acid chain; its full sequence is UPF0397 protein BCE_2667 (182 aa).

5 helical membrane-spanning segments follow: residues 9 to 29 (VVAI…GFSI), 40 to 60 (AILT…IGLI), 71 to 91 (WGIW…MGLI), 114 to 134 (ITGL…DIIV), and 142 to 162 (IVIQ…VLGL).

The protein belongs to the UPF0397 family.

The protein resides in the cell membrane. In Bacillus cereus (strain ATCC 10987 / NRS 248), this protein is UPF0397 protein BCE_2667.